Reading from the N-terminus, the 283-residue chain is Release factor glutamine methyltransferase (283 aa).

Residues 120-124 (GTGSG), Asp143, Phe172, and Asn187 contribute to the S-adenosyl-L-methionine site. 187 to 190 (NPPY) provides a ligand contact to substrate.

This sequence belongs to the protein N5-glutamine methyltransferase family. PrmC subfamily.

It carries out the reaction L-glutaminyl-[peptide chain release factor] + S-adenosyl-L-methionine = N(5)-methyl-L-glutaminyl-[peptide chain release factor] + S-adenosyl-L-homocysteine + H(+). Functionally, methylates the class 1 translation termination release factors RF1/PrfA and RF2/PrfB on the glutamine residue of the universally conserved GGQ motif. The protein is Release factor glutamine methyltransferase of Moorella thermoacetica (strain ATCC 39073 / JCM 9320).